The following is a 719-amino-acid chain: Probable 1-deoxy-D-xylulose-5-phosphate synthase, chloroplastic (719 aa).

A chloroplast-targeting transit peptide spans 1–57; that stretch reads MALCAYAFPGILNRTVAVASDASKPTPLFSEWIHGTDLQFQFHQKLTQVKKRSRTVQ. Thiamine diphosphate contacts are provided by residues His-145 and 186 to 188; that span reads GHS. A Mg(2+)-binding site is contributed by Asp-217. Thiamine diphosphate contacts are provided by residues 218 to 219, Asn-246, Tyr-367, and Glu-449; that span reads GA. Residue Asn-246 participates in Mg(2+) binding.

This sequence belongs to the transketolase family. DXPS subfamily. As to quaternary structure, homodimer. Mg(2+) is required as a cofactor. Requires thiamine diphosphate as cofactor.

It is found in the plastid. Its subcellular location is the chloroplast. The enzyme catalyses D-glyceraldehyde 3-phosphate + pyruvate + H(+) = 1-deoxy-D-xylulose 5-phosphate + CO2. Its pathway is metabolic intermediate biosynthesis; 1-deoxy-D-xylulose 5-phosphate biosynthesis; 1-deoxy-D-xylulose 5-phosphate from D-glyceraldehyde 3-phosphate and pyruvate: step 1/1. In terms of biological role, catalyzes the acyloin condensation reaction between C atoms 2 and 3 of pyruvate and glyceraldehyde 3-phosphate to yield 1-deoxy-D-xylulose-5-phosphate (DXP). In Capsicum annuum (Capsicum pepper), this protein is Probable 1-deoxy-D-xylulose-5-phosphate synthase, chloroplastic (TKT2).